The primary structure comprises 336 residues: Potassium channel subfamily K member 1 (336 aa).

Residues M1–A20 are Cytoplasmic-facing. The chain crosses the membrane as a helical span at residues W21–F41. At S42–D103 the chain is on the extracellular side. N-linked (GlcNAc...) asparagine glycosylation is present at N95. Positions F104–S116 form an intramembrane region, helical. An intramembrane segment occupies T117–H122. Residues T117–H122 are selectivity filter 1. Residues T123 to A132 lie on the Extracellular side of the membrane. A helical transmembrane segment spans residues F133–V156. At T157–I181 the chain is on the cytoplasmic side. The helical transmembrane segment at V182–V202 threads the bilayer. Topologically, residues F203 to N211 are extracellular. The helical intramembrane region spans F212–S224. The selectivity filter 2 stretch occupies residues T225 to D230. An intramembrane segment occupies T225–Y231. Residues V232 to E243 lie on the Extracellular side of the membrane. Residues L244–F267 form a helical membrane-spanning segment. Residues C268–H336 are Cytoplasmic-facing. Residue K274 forms a Glycyl lysine isopeptide (Lys-Gly) (interchain with G-Cter in SUMO) linkage. Residues I293–L299 form an important for intracellular retention in recycling endosomes region. A disordered region spans residues Q315–H336. S326 is subject to Phosphoserine.

Belongs to the two pore domain potassium channel (TC 1.A.1.8) family. Homodimer; disulfide-linked. Heterodimer with KCNK2; disulfide-linked. In astrocytes, forms mostly heterodimeric potassium channels with KCNK2, with only a minor proportion of functional channels containing homodimeric KCNK1. Interacts with KCNK3 and KCNK9, forming functional heterodimeric channels. Interacts with GNG4. Identified in a complex with PSD and ARF6; interacts only with PSD that is bound to ARF6. Interacts with UBE2I. In terms of processing, sumoylation is controversial. Sumoylated by UBE2I. Not sumoylated when expressed in xenopus oocytes or mammalian cells. Sumoylation inactivates the channel, but does not interfere with expression at the cell membrane. Sumoylation of a single subunit is sufficient to silence the dimeric channel. Sumoylation of KCNK1 is sufficient to silence heterodimeric channels formed by KCNK1 and KCNK3 or KCNK9. Desumoylated by SENP1; this activates the channel. Desumoylated by SENP1; this strongly increases halothane-mediated activation of heterodimeric channels formed with KCNK9. SENP1 treatment has no effect. As to expression, expressed in renal distal tubules, especially in cortical collecting duct and cortical thick ascending limb, with lower levels in the connecting tubule.

It is found in the cell membrane. Its subcellular location is the recycling endosome. The protein resides in the synaptic cell membrane. It localises to the cytoplasmic vesicle. The protein localises to the perikaryon. It is found in the cell projection. Its subcellular location is the dendrite. The protein resides in the apical cell membrane. The catalysed reaction is K(+)(in) = K(+)(out). It carries out the reaction NH4(+)(in) = NH4(+)(out). It catalyses the reaction Na(+)(in) = Na(+)(out). The enzyme catalyses Rb(+)(in) = Rb(+)(out). The catalysed reaction is Cs(+)(in) = Cs(+)(out). It carries out the reaction Li(+)(in) = Li(+)(out). It catalyses the reaction L-glutamate(out) = L-glutamate(in). The enzyme catalyses chloride(in) = chloride(out). Its function is as follows. Ion channel that contributes to passive transmembrane potassium transport and to the regulation of the resting membrane potential in brain astrocytes, but also in kidney and in other tissues. Forms dimeric channels through which potassium ions pass in accordance with their electrochemical gradient. The channel is selective for K(+) ions at physiological potassium concentrations and at neutral pH, but becomes permeable to Na(+) at subphysiological K(+) levels and upon acidification of the extracellular medium. The homodimer has very low potassium channel activity, when expressed in heterologous systems, and can function as weakly inward rectifying potassium channel. Channel activity is modulated by activation of serotonin receptors. Heterodimeric channels containing KCNK1 and KCNK2 have much higher activity, and may represent the predominant form in astrocytes. Heterodimeric channels containing KCNK1 and KCNK3 or KCNK9 have much higher activity. Heterodimeric channels formed by KCNK1 and KCNK9 may contribute to halothane-sensitive currents. Mediates outward rectifying potassium currents in dentate gyrus granule cells and contributes to the regulation of their resting membrane potential. Contributes to the regulation of action potential firing in dentate gyrus granule cells and down-regulates their intrinsic excitability. In astrocytes, the heterodimer formed by KCNK1 and KCNK2 is required for rapid glutamate release in response to activation of G-protein coupled receptors, such as F2R and CNR1. Required for normal ion and water transport in the kidney. Contributes to the regulation of the resting membrane potential of pancreatic beta cells. The low channel activity of homodimeric KCNK1 may be due to sumoylation. The low channel activity may be due to rapid internalization from the cell membrane and retention in recycling endosomes. Permeable to monovalent cations with ion selectivity for K(+) &gt; Rb(+) &gt;&gt; NH4(+) &gt;&gt; Cs(+) = Na(+) = Li(+). This is Potassium channel subfamily K member 1 from Oryctolagus cuniculus (Rabbit).